Here is a 93-residue protein sequence, read N- to C-terminus: DNA-binding protein HU 1 (93 aa).

This sequence belongs to the bacterial histone-like protein family. As to quaternary structure, homodimer.

It localises to the cytoplasm. The protein localises to the nucleoid. Histone-like DNA-binding protein which is capable of wrapping DNA to stabilize it, and thus to prevent its denaturation under extreme environmental conditions. The chain is DNA-binding protein HU 1 (hup1) from Streptomyces coelicolor (strain ATCC BAA-471 / A3(2) / M145).